The sequence spans 374 residues: P2Y purinoceptor 11 (374 aa).

The Extracellular segment spans residues 1 to 29 (MAANVSGAKSCPANFLAAADDKLSGFQGD). N-linked (GlcNAc...) asparagine glycosylation is present at Asn-4. The helical transmembrane segment at 30 to 50 (FLWPILVVEFLVAVASNGLAL) threads the bilayer. The Cytoplasmic portion of the chain corresponds to 51–64 (YRFSIRKQRPWHPA). The helical transmembrane segment at 65–85 (VVFSVQLAVSDLLCALTLPPL) threads the bilayer. Residues 86–116 (AAYLYPPKHWRYGEAACRLERFLFTCNLLGS) are Extracellular-facing. A disulfide bridge connects residues Cys-102 and Cys-180. A helical transmembrane segment spans residues 117–137 (VIFITCISLNRYLGIVHPFFA). The Cytoplasmic portion of the chain corresponds to 138-146 (RSHLRPKHA). Residues 147-167 (WAVSAAGWVLAALLAMPTLSF) traverse the membrane as a helical segment. Over 168–206 (SHLKRPQQGAGNCSVARPEACIKCLGTADHGLAAYRAYS) the chain is Extracellular. N-linked (GlcNAc...) asparagine glycosylation is present at Asn-179. A helical transmembrane segment spans residues 207 to 227 (LVLAGLGCGLPLLLTLAAYGA). At 228–245 (LGRAVLRSPGMTVAEKLR) the chain is on the cytoplasmic side. Residues 246–266 (VAALVASGVALYASSYVPYHI) form a helical membrane-spanning segment. Residues 267 to 308 (MRVLNVDARRRWSTRCPSFADIAQATAALELGPYVGYQVMRG) lie on the Extracellular side of the membrane. A helical membrane pass occupies residues 309-329 (LMPLAFCVHPLLYMAAVPSLG). Over 330–374 (CCCRHCPGYRDSWNPEDAKSTGQALPLNATAAPKPSEPQSRELSQ) the chain is Cytoplasmic. Residues 345–374 (EDAKSTGQALPLNATAAPKPSEPQSRELSQ) form a disordered region.

This sequence belongs to the G-protein coupled receptor 1 family. As to expression, highest expression in liver and spleen.

It localises to the cell membrane. Receptor for ATP and ADP coupled to G-proteins that activate both phosphatidylinositol-calcium and adenylyl cyclase second messenger systems. Not activated by UTP or UDP. The polypeptide is P2Y purinoceptor 11 (P2RY11) (Homo sapiens (Human)).